Here is a 354-residue protein sequence, read N- to C-terminus: 3-isopropylmalate dehydrogenase (354 aa).

Positions 96, 106, 132, and 223 each coordinate substrate. Mg(2+) contacts are provided by Asp223, Asp247, and Asp251. Position 283 to 295 (283 to 295 (GSAPDIAGQGKAD)) interacts with NAD(+).

Belongs to the isocitrate and isopropylmalate dehydrogenases family. LeuB type 2 subfamily. Homodimer. Mg(2+) is required as a cofactor. Requires Mn(2+) as cofactor.

It localises to the cytoplasm. It catalyses the reaction (2R,3S)-3-isopropylmalate + NAD(+) = 4-methyl-2-oxopentanoate + CO2 + NADH. It participates in amino-acid biosynthesis; L-leucine biosynthesis; L-leucine from 3-methyl-2-oxobutanoate: step 3/4. In terms of biological role, catalyzes the oxidation of 3-carboxy-2-hydroxy-4-methylpentanoate (3-isopropylmalate) to 3-carboxy-4-methyl-2-oxopentanoate. The product decarboxylates to 4-methyl-2 oxopentanoate. The polypeptide is 3-isopropylmalate dehydrogenase (Thermobifida fusca (strain YX)).